The chain runs to 255 residues: 1-(5-phosphoribosyl)-5-[(5-phosphoribosylamino)methylideneamino] imidazole-4-carboxamide isomerase (255 aa).

Asp8 (proton acceptor) is an active-site residue. The active-site Proton donor is Asp129.

The protein belongs to the HisA/HisF family.

The protein localises to the cytoplasm. It catalyses the reaction 1-(5-phospho-beta-D-ribosyl)-5-[(5-phospho-beta-D-ribosylamino)methylideneamino]imidazole-4-carboxamide = 5-[(5-phospho-1-deoxy-D-ribulos-1-ylimino)methylamino]-1-(5-phospho-beta-D-ribosyl)imidazole-4-carboxamide. It functions in the pathway amino-acid biosynthesis; L-histidine biosynthesis; L-histidine from 5-phospho-alpha-D-ribose 1-diphosphate: step 4/9. This chain is 1-(5-phosphoribosyl)-5-[(5-phosphoribosylamino)methylideneamino] imidazole-4-carboxamide isomerase, found in Prochlorococcus marinus (strain AS9601).